Reading from the N-terminus, the 156-residue chain is Ribosome maturation factor RimP (156 aa).

The protein belongs to the RimP family.

The protein resides in the cytoplasm. Required for maturation of 30S ribosomal subunits. The sequence is that of Ribosome maturation factor RimP from Bacillus cereus (strain B4264).